The following is a 274-amino-acid chain: Urease accessory protein UreD (274 aa).

This sequence belongs to the UreD family. In terms of assembly, ureD, UreF and UreG form a complex that acts as a GTP-hydrolysis-dependent molecular chaperone, activating the urease apoprotein by helping to assemble the nickel containing metallocenter of UreC. The UreE protein probably delivers the nickel.

The protein localises to the cytoplasm. Its function is as follows. Required for maturation of urease via the functional incorporation of the urease nickel metallocenter. This Lachnoclostridium phytofermentans (strain ATCC 700394 / DSM 18823 / ISDg) (Clostridium phytofermentans) protein is Urease accessory protein UreD.